The following is a 698-amino-acid chain: Dolichyl-diphosphooligosaccharide--protein glycosyltransferase subunit 2 (698 aa).

Positions 1–29 are cleaved as a signal peptide; the sequence is MAAAGGLPASATLLLLVIAAVAVAPLASA. Residues 30–600 lie on the Lumenal side of the membrane; it reads VRPVSDAHRS…RSPEKRPPKE (571 aa). A helical transmembrane segment spans residues 601-621; the sequence is LSFAFTGLTLLPIVGFLIGLM. At 622–638 the chain is on the cytoplasmic side; it reads RLGVNLKNFPSLPAPAA. A helical transmembrane segment spans residues 639–659; it reads FASLFHAGIGAVLLLYVLFWI. Position 660 (Lys-660) is a topological domain, lumenal. A helical membrane pass occupies residues 661–681; that stretch reads LDLFTTLKYLSFLGVFLVFVG. At 682 to 698 the chain is on the cytoplasmic side; the sequence is HRALSYLSSTSAKQKTA.

This sequence belongs to the SWP1 family. Component of the oligosaccharyltransferase (OST) complex.

It localises to the endoplasmic reticulum membrane. The protein operates within protein modification; protein glycosylation. In terms of biological role, subunit of the oligosaccharyl transferase (OST) complex that catalyzes the initial transfer of a defined glycan (Glc(3)Man(9)GlcNAc(2) in eukaryotes) from the lipid carrier dolichol-pyrophosphate to an asparagine residue within an Asn-X-Ser/Thr consensus motif in nascent polypeptide chains, the first step in protein N-glycosylation. N-glycosylation occurs cotranslationally and the complex associates with the Sec61 complex at the channel-forming translocon complex that mediates protein translocation across the endoplasmic reticulum (ER). All subunits are required for a maximal enzyme activity. This chain is Dolichyl-diphosphooligosaccharide--protein glycosyltransferase subunit 2 (RPN2), found in Oryza sativa subsp. japonica (Rice).